We begin with the raw amino-acid sequence, 1011 residues long: Translation initiation factor IF-2 (1011 aa).

The segment covering 49–77 (YIHEHGTEESPRRRSAGEDEFKPKIDLSK) has biased composition (basic and acidic residues). 2 disordered regions span residues 49-152 (YIHE…RFIT) and 187-407 (AAPA…LSLS). The segment covering 93 to 104 (APPPPPPPPPRP) has biased composition (pro residues). A compositionally biased stretch (low complexity) spans 105–115 (AVKAPSPVSQE). Residues 116-126 (PRPPAVPPAPQ) are compositionally biased toward pro residues. 2 stretches are compositionally biased toward low complexity: residues 187–212 (AAPAEEPKAAAPATTAPEAPEVKAPV) and 228–242 (TAKPEAPAAPGAATP). Pro residues-rich tracts occupy residues 243-252 (APTPGRPLPG) and 276-290 (SAPPPAPPRPTPPPQ). The span at 316-329 (GPGGGSGGPGGFQR) shows a compositional bias: gly residues. Residues 361-380 (LAPPGAPANKPAGRPAPARR) show a composition bias toward low complexity. The 177-residue stretch at 502-678 (VRPPVVTIMG…CLVADLGDLK (177 aa)) folds into the tr-type G domain. The G1 stretch occupies residues 511–518 (GHVDHGKT). 511–518 (GHVDHGKT) lines the GTP pocket. Residues 536–540 (GITQH) are G2. The tract at residues 564 to 567 (DTPG) is G3. GTP-binding positions include 564–568 (DTPGH) and 618–621 (NKID). The tract at residues 618 to 621 (NKID) is G4. The G5 stretch occupies residues 654-656 (SAK).

The protein belongs to the TRAFAC class translation factor GTPase superfamily. Classic translation factor GTPase family. IF-2 subfamily.

Its subcellular location is the cytoplasm. In terms of biological role, one of the essential components for the initiation of protein synthesis. Protects formylmethionyl-tRNA from spontaneous hydrolysis and promotes its binding to the 30S ribosomal subunits. Also involved in the hydrolysis of GTP during the formation of the 70S ribosomal complex. The polypeptide is Translation initiation factor IF-2 (Koribacter versatilis (strain Ellin345)).